A 315-amino-acid polypeptide reads, in one-letter code: Protein rlx (315 aa).

A disordered region spans residues 263-315 (TEQLKQRRVERAQETKQAHSKISSRDTRESENQRERAKGNNIRIERGDEGLSR).

This protein is probably required for relaxation complex formation and plasmid mobilization by conjugative plasmids. This is Protein rlx (rlx) from Staphylococcus aureus.